The sequence spans 415 residues: ATP-dependent Clp protease ATP-binding subunit ClpX (415 aa).

The 53-residue stretch at 1-53 (MLRSKGDLVLGCSFCGKKEDERRRIVTGHGVSICNYCVERCAEYLRDRKPSAL) folds into the ClpX-type ZB domain. The Zn(2+) site is built by Cys12, Cys15, Cys34, and Cys37. An ATP-binding site is contributed by 118–125 (PTGSGKTL).

It belongs to the ClpX chaperone family. Component of the ClpX-ClpP complex. Forms a hexameric ring that, in the presence of ATP, binds to fourteen ClpP subunits assembled into a disk-like structure with a central cavity, resembling the structure of eukaryotic proteasomes.

Its function is as follows. ATP-dependent specificity component of the Clp protease. It directs the protease to specific substrates. Can perform chaperone functions in the absence of ClpP. This is ATP-dependent Clp protease ATP-binding subunit ClpX from Treponema pallidum (strain Nichols).